Consider the following 162-residue polypeptide: Autophagy-related protein 8 (162 aa).

Residues 1–27 show a composition bias toward basic and acidic residues; it reads MRSKFKDEHPFEKRKAEAERIRQKYSD. The disordered stretch occupies residues 1–42; the sequence is MRSKFKDEHPFEKRKAEAERIRQKYSDRIPPSPHSPASRLIG. A lipid anchor (Phosphatidylethanolamine amidated glycine) is attached at Gly157. Residues 158–162 constitute a propeptide, removed in mature form; sequence GFETA.

Belongs to the ATG8 family.

Its subcellular location is the cytoplasmic vesicle. It is found in the autophagosome membrane. It localises to the vacuole membrane. Ubiquitin-like modifier involved in autophagosome formation. With ATG4, mediates the delivery of the autophagosomes to the vacuole via the microtubule cytoskeleton. Required for selective autophagic degradation of the nucleus (nucleophagy) as well as for mitophagy which contributes to regulate mitochondrial quantity and quality by eliminating the mitochondria to a basal level to fulfill cellular energy requirements and preventing excess ROS production. Also participates in membrane fusion events that take place in the early secretory pathway. Also involved in endoplasmic reticulum-specific autophagic process and is essential for the survival of cells subjected to severe ER stress. The ATG8-PE conjugate mediates tethering between adjacent membranes and stimulates membrane hemifusion, leading to expansion of the autophagosomal membrane during autophagy. This is Autophagy-related protein 8 from Colletotrichum higginsianum (strain IMI 349063) (Crucifer anthracnose fungus).